The primary structure comprises 630 residues: tRNA uridine 5-carboxymethylaminomethyl modification enzyme MnmG (630 aa).

Residues 14-19 (GAGHAG), Val126, and Ser181 each bind FAD. Position 273–287 (273–287 (GPRYCPSIEDKVVRF)) interacts with NAD(+). Gln370 is a binding site for FAD.

Belongs to the MnmG family. As to quaternary structure, homodimer. Heterotetramer of two MnmE and two MnmG subunits. FAD is required as a cofactor.

The protein resides in the cytoplasm. In terms of biological role, NAD-binding protein involved in the addition of a carboxymethylaminomethyl (cmnm) group at the wobble position (U34) of certain tRNAs, forming tRNA-cmnm(5)s(2)U34. In Alkaliphilus metalliredigens (strain QYMF), this protein is tRNA uridine 5-carboxymethylaminomethyl modification enzyme MnmG.